A 524-amino-acid chain; its full sequence is Cytochrome P450 monooxygenase alt1 (524 aa).

The chain crosses the membrane as a helical span at residues 24–44 (IANMLSVIAFSICISPIVYFL). C469 contributes to the heme binding site.

It belongs to the cytochrome P450 family. Heme is required as a cofactor.

Its subcellular location is the membrane. Its pathway is secondary metabolite biosynthesis. In terms of biological role, cytochrome P450 monooxygenase; part of the gene cluster that mediates the biosynthesis of alternapyrone derivatives. Alternapyrone is a decaketide with octa-methylation from methionine on every C2 unit except the third unit. All the domains in the polyketide synthase alt5 are apparently involved in alternapyrone synthesis, that is, the 8 CMeT, 7 KR, 7 DH, and 4 ER reactions in the 9 KS-mediated condensation steps required for alternapyrone synthesis. the alternapyrone produced by alt5 might be intensively modified by cytochrome P450 monooxygenases alt1, alt2 and alt3 and FAD-dependent oxidoreductase alt4 present in the alt gene cluster. The sequence is that of Cytochrome P450 monooxygenase alt1 from Alternaria solani.